Here is a 188-residue protein sequence, read N- to C-terminus: Putative glutamine amidotransferase-like protein YvdE homolog (188 aa).

The Glutamine amidotransferase type-1 domain maps to 17-188 (SPFWWNKVSY…IKDLGQGLQA (172 aa)).

This Lactococcus lactis subsp. cremoris (Streptococcus cremoris) protein is Putative glutamine amidotransferase-like protein YvdE homolog.